The primary structure comprises 744 residues: Cullin-1 (744 aa).

Residues 674–736 enclose the Cullin neddylation domain; the sequence is DRRYAIDASI…RDYLERDKDN (63 aa).

Belongs to the cullin family. Part of a SCF (SKP1-CUL1-F-box protein) E3 ubiquitin-protein ligase complex. Is able to form the SCF complex together with SKP1 and the rice black streaked dwarf virus RBSDV protein P7-2. Interacts with D3. Post-translationally, neddylated (rubylated). Deneddylation occurs upon interaction with the COP9 signalosome (CSN) complex. As to expression, expressed in dry seeds and coleoptiles.

Functionally, involved in ubiquitination and subsequent proteasomal degradation of target proteins. The polypeptide is Cullin-1 (Oryza sativa subsp. japonica (Rice)).